Reading from the N-terminus, the 183-residue chain is Large ribosomal subunit protein uL6 (183 aa).

The protein belongs to the universal ribosomal protein uL6 family. Part of the 50S ribosomal subunit.

Its function is as follows. This protein binds to the 23S rRNA, and is important in its secondary structure. It is located near the subunit interface in the base of the L7/L12 stalk, and near the tRNA binding site of the peptidyltransferase center. This Methanococcus aeolicus (strain ATCC BAA-1280 / DSM 17508 / OCM 812 / Nankai-3) protein is Large ribosomal subunit protein uL6.